Here is a 519-residue protein sequence, read N- to C-terminus: Methionine--tRNA ligase (519 aa).

The 'HIGH' region signature appears at 11 to 21; it reads AYPNAAPHVGH. The short motif at 299 to 303 is the 'KMSKS' region element; that stretch reads KMSKS. ATP is bound at residue Lys302. Residues 500-519 are disordered; the sequence is LPPPTGVFPRYQPPQPPEGK.

This sequence belongs to the class-I aminoacyl-tRNA synthetase family. MetG type 2B subfamily. Monomer.

The protein localises to the cytoplasm. The enzyme catalyses tRNA(Met) + L-methionine + ATP = L-methionyl-tRNA(Met) + AMP + diphosphate. Its function is as follows. Is required not only for elongation of protein synthesis but also for the initiation of all mRNA translation through initiator tRNA(fMet) aminoacylation. The chain is Methionine--tRNA ligase from Mycobacterium tuberculosis (strain ATCC 25618 / H37Rv).